An 837-amino-acid chain; its full sequence is MWLSFLRPRDRFSLAELRYLTDQLRKIQIVNEANKDLVIEALRSIAEILTYGDQHDPLFFEFFMEKQVMGEFVRILRVSKTVTVSVQLLQTMSIMIQNLKSEQAIYYLFSNEYVNYLITYTFDFQHEELLSYYISFLRAVSGKLNKHTISLLLKTENDVVVSFPLYVEGIQFAFHEENMIRTAVRALTLNVYHVGDESVNDYVVSPPHTEYFSKLISFFQKQCMDLSAMVLNTLKSPSPDSGGKLFSAVDGIEDTLYYFSDVISAGIPDIGRLITDHILQHLTLPLLLPSLCSEAVNDISVDPVTSLYLLSCILRIVKIKDLANMTAATLFCPVKAFISSSLVKPNSSLAPEGLTYVNGHPDKGVTEEANQQCSSTAAGMSDDGNSHLCSEDTPKSIFNNSHMTFRETLLQYISEGDDVQAQGSLFVLATLLQTKELEESMLDAFGILPQRKQHKKLLLQSLVGEDTGEEQLFSPRNGSMRDGLSSELDWYLRRLEEQFGVCCSLPGAARCPRVHRHQVVDTLVTLLCRENISAETLWDGGWLLRQLLPYSEAEFNRKHLKMLNVSYEKCKNSLTREIKGIWPDLLIRVLLDEWRKCKRVIEAPSPQKEPKSVLLQLDRSSSNDNSVSESSFTAGERMCEVVKVFVLLHQLQIFSLGRSLPEQPPIYPPADRSETSRATRAGLDVSVPKPGTELKLVDAVPCRIAFERGKERDFSFLALSSGESGWIVLADPDNGIVRVTAPLAGCKPRIDEKHPRWLHLRIRPSTLPLLDPTKRGVYEKLKSKGLVDGRWILAFRDDESCHSAYSMVAGEIDLQCSEVERRLRPLFDLERNQLEDQ.

The region spanning 42–192 is the FPL domain; it reads LRSIAEILTY…AVRALTLNVY (151 aa). The segment at 366–386 is disordered; sequence TEEANQQCSSTAAGMSDDGNS. Positions 368–378 are enriched in polar residues; sequence EANQQCSSTAA.

This sequence belongs to the CLEC16A/gop-1 family.

It is found in the golgi apparatus membrane. Involved in membrane trafficking and vacuole development through membrane fusion at the vacuole. Required for membrane trafficking machinery and accumulation of flavonoids in the seed coat. This Arabidopsis thaliana (Mouse-ear cress) protein is Protein TRANSPARENT TESTA 9.